The following is an 885-amino-acid chain: Aconitate hydratase A (885 aa).

Residues Cys-425, Cys-491, and Cys-494 each coordinate [4Fe-4S] cluster.

It belongs to the aconitase/IPM isomerase family. Monomer. The cofactor is [4Fe-4S] cluster.

The enzyme catalyses citrate = D-threo-isocitrate. It carries out the reaction (2S,3R)-3-hydroxybutane-1,2,3-tricarboxylate = 2-methyl-cis-aconitate + H2O. Its pathway is carbohydrate metabolism; tricarboxylic acid cycle; isocitrate from oxaloacetate: step 2/2. It participates in organic acid metabolism; propanoate degradation. Functionally, involved in the catabolism of short chain fatty acids (SCFA) via the tricarboxylic acid (TCA)(acetyl degradation route) and probably the 2-methylcitrate cycle I (propionate degradation route). Catalyzes the reversible isomerization of citrate to isocitrate via cis-aconitate. Could catalyze the hydration of 2-methyl-cis-aconitate to yield (2R,3S)-2-methylisocitrate. The apo form of AcnA functions as a RNA-binding regulatory protein. The chain is Aconitate hydratase A (acnA) from Rickettsia bellii (strain RML369-C).